A 504-amino-acid polypeptide reads, in one-letter code: ATP synthase subunit beta (504 aa).

181-188 (GGAGVGKT) is an ATP binding site.

This sequence belongs to the ATPase alpha/beta chains family. In terms of assembly, F-type ATPases have 2 components, CF(1) - the catalytic core - and CF(0) - the membrane proton channel. CF(1) has five subunits: alpha(3), beta(3), gamma(1), delta(1), epsilon(1). CF(0) has three main subunits: a(1), b(2) and c(9-12). The alpha and beta chains form an alternating ring which encloses part of the gamma chain. CF(1) is attached to CF(0) by a central stalk formed by the gamma and epsilon chains, while a peripheral stalk is formed by the delta and b chains.

The protein localises to the cell inner membrane. It catalyses the reaction ATP + H2O + 4 H(+)(in) = ADP + phosphate + 5 H(+)(out). Produces ATP from ADP in the presence of a proton gradient across the membrane. The catalytic sites are hosted primarily by the beta subunits. The chain is ATP synthase subunit beta from Ehrlichia ruminantium (strain Welgevonden).